The sequence spans 127 residues: Biogenesis of lysosome-related organelles complex 1 subunit BLS1 (127 aa).

The disordered stretch occupies residues 103 to 127; it reads KNSHNTNHGGCNKTKNSSKDKLLDK. A compositionally biased stretch (polar residues) spans 105 to 117; it reads SHNTNHGGCNKTK.

The protein belongs to the BLOC1S1 family. In terms of assembly, component of the biogenesis of lysosome-related organelles complex-1 (BLOC-1).

It is found in the endosome. In terms of biological role, component of the biogenesis of lysosome-related organelles complex-1 (BLOC-1), a complex involved in endosomal cargo sorting. The polypeptide is Biogenesis of lysosome-related organelles complex 1 subunit BLS1 (BLS1) (Vanderwaltozyma polyspora (strain ATCC 22028 / DSM 70294 / BCRC 21397 / CBS 2163 / NBRC 10782 / NRRL Y-8283 / UCD 57-17) (Kluyveromyces polysporus)).